The chain runs to 118 residues: Non-specific lipid-transfer protein 3 (118 aa).

The first 25 residues, 1–25 (MARAAATQLVLVAMVAAMLLVATDA), serve as a signal peptide directing secretion. 4 cysteine pairs are disulfide-bonded: Cys29–Cys77, Cys39–Cys54, Cys55–Cys100, and Cys75–Cys114.

Belongs to the plant LTP family.

Its function is as follows. Plant non-specific lipid-transfer proteins transfer phospholipids as well as galactolipids across membranes. May play a role in wax or cutin deposition in the cell walls of expanding epidermal cells and certain secretory tissues. The sequence is that of Non-specific lipid-transfer protein 3 (LTP3) from Hordeum vulgare (Barley).